Consider the following 327-residue polypeptide: Phenylalanine--tRNA ligase alpha subunit (327 aa).

Glu-252 contributes to the Mg(2+) binding site.

This sequence belongs to the class-II aminoacyl-tRNA synthetase family. Phe-tRNA synthetase alpha subunit type 1 subfamily. Tetramer of two alpha and two beta subunits. It depends on Mg(2+) as a cofactor.

The protein resides in the cytoplasm. The catalysed reaction is tRNA(Phe) + L-phenylalanine + ATP = L-phenylalanyl-tRNA(Phe) + AMP + diphosphate + H(+). This Pectobacterium atrosepticum (strain SCRI 1043 / ATCC BAA-672) (Erwinia carotovora subsp. atroseptica) protein is Phenylalanine--tRNA ligase alpha subunit.